The sequence spans 386 residues: Bifunctional enzyme IspD/IspF (386 aa).

The tract at residues 1–225 is 2-C-methyl-D-erythritol 4-phosphate cytidylyltransferase; sequence MYNFVTLSIL…SCLSAPSSDT (225 aa). Positions 226–386 are 2-C-methyl-D-erythritol 2,4-cyclodiphosphate synthase; sequence LSGVGFDVHA…NLKYFDWTKI (161 aa). The a divalent metal cation site is built by Asp232 and His234. 4-CDP-2-C-methyl-D-erythritol 2-phosphate is bound by residues 232-234 and 258-259; these read DVH and HS. An a divalent metal cation-binding site is contributed by His266. 4-CDP-2-C-methyl-D-erythritol 2-phosphate-binding positions include 280–282, 285–289, 356–359, Phe363, and Arg366; these read DIG, FPDND, and TTTE.

In the N-terminal section; belongs to the IspD/TarI cytidylyltransferase family. IspD subfamily. It in the C-terminal section; belongs to the IspF family. The cofactor is a divalent metal cation.

The catalysed reaction is 2-C-methyl-D-erythritol 4-phosphate + CTP + H(+) = 4-CDP-2-C-methyl-D-erythritol + diphosphate. The enzyme catalyses 4-CDP-2-C-methyl-D-erythritol 2-phosphate = 2-C-methyl-D-erythritol 2,4-cyclic diphosphate + CMP. It participates in isoprenoid biosynthesis; isopentenyl diphosphate biosynthesis via DXP pathway; isopentenyl diphosphate from 1-deoxy-D-xylulose 5-phosphate: step 2/6. The protein operates within isoprenoid biosynthesis; isopentenyl diphosphate biosynthesis via DXP pathway; isopentenyl diphosphate from 1-deoxy-D-xylulose 5-phosphate: step 4/6. Bifunctional enzyme that catalyzes the formation of 4-diphosphocytidyl-2-C-methyl-D-erythritol from CTP and 2-C-methyl-D-erythritol 4-phosphate (MEP) (IspD), and catalyzes the conversion of 4-diphosphocytidyl-2-C-methyl-D-erythritol 2-phosphate (CDP-ME2P) to 2-C-methyl-D-erythritol 2,4-cyclodiphosphate (ME-CPP) with a corresponding release of cytidine 5-monophosphate (CMP) (IspF). The sequence is that of Bifunctional enzyme IspD/IspF from Sulfurimonas denitrificans (strain ATCC 33889 / DSM 1251) (Thiomicrospira denitrificans (strain ATCC 33889 / DSM 1251)).